The chain runs to 437 residues: Probable exopolygalacturonase C (437 aa).

The first 21 residues, 1–21, serve as a signal peptide directing secretion; it reads MLITKTAFLAFLLSSVPLAHG. N-linked (GlcNAc...) asparagine glycosylation is found at N25, N42, N82, N99, and N149. PbH1 repeat units lie at residues 215 to 236 and 238 to 259; these read GTNI…AVGS and SHNI…SIGS. The Proton donor role is filled by D229. Residue H253 is part of the active site. The N-linked (GlcNAc...) asparagine glycan is linked to N269. PbH1 repeat units lie at residues 270 to 291 and 299 to 320; these read ITNL…RFKS and VKNV…FVTQ. N-linked (GlcNAc...) asparagine glycosylation is found at N301 and N311. The cysteines at positions 386 and 392 are disulfide-linked. Residues N428 and N431 are each glycosylated (N-linked (GlcNAc...) asparagine).

This sequence belongs to the glycosyl hydrolase 28 family.

The protein resides in the secreted. It carries out the reaction [(1-&gt;4)-alpha-D-galacturonosyl](n) + H2O = alpha-D-galacturonate + [(1-&gt;4)-alpha-D-galacturonosyl](n-1). In terms of biological role, specific in hydrolyzing the terminal glycosidic bond of polygalacturonic acid and oligogalacturonates. This is Probable exopolygalacturonase C (pgxC) from Aspergillus flavus (strain ATCC 200026 / FGSC A1120 / IAM 13836 / NRRL 3357 / JCM 12722 / SRRC 167).